The sequence spans 126 residues: Holo-[acyl-carrier-protein] synthase (126 aa).

Mg(2+)-binding residues include aspartate 9 and glutamate 58.

It belongs to the P-Pant transferase superfamily. AcpS family. The cofactor is Mg(2+).

It is found in the cytoplasm. The catalysed reaction is apo-[ACP] + CoA = holo-[ACP] + adenosine 3',5'-bisphosphate + H(+). Functionally, transfers the 4'-phosphopantetheine moiety from coenzyme A to a Ser of acyl-carrier-protein. This Citrobacter koseri (strain ATCC BAA-895 / CDC 4225-83 / SGSC4696) protein is Holo-[acyl-carrier-protein] synthase.